We begin with the raw amino-acid sequence, 518 residues long: Probable cytochrome P450 317a1 (518 aa).

Cys-461 is a binding site for heme.

This sequence belongs to the cytochrome P450 family. It depends on heme as a cofactor.

The protein localises to the endoplasmic reticulum membrane. It localises to the microsome membrane. In terms of biological role, may be involved in the metabolism of insect hormones and in the breakdown of synthetic insecticides. This Drosophila melanogaster (Fruit fly) protein is Probable cytochrome P450 317a1 (Cyp317a1).